A 308-amino-acid polypeptide reads, in one-letter code: Ribosomal protein L11 methyltransferase (308 aa).

S-adenosyl-L-methionine is bound by residues Thr-157, Gly-178, Asp-200, and Asn-243.

The protein belongs to the methyltransferase superfamily. PrmA family.

It is found in the cytoplasm. It catalyses the reaction L-lysyl-[protein] + 3 S-adenosyl-L-methionine = N(6),N(6),N(6)-trimethyl-L-lysyl-[protein] + 3 S-adenosyl-L-homocysteine + 3 H(+). Methylates ribosomal protein L11. The polypeptide is Ribosomal protein L11 methyltransferase (Desulforamulus reducens (strain ATCC BAA-1160 / DSM 100696 / MI-1) (Desulfotomaculum reducens)).